The following is a 248-amino-acid chain: ATP synthase subunit a, chloroplastic (248 aa).

The next 4 helical transmembrane spans lie at 34 to 54, 95 to 115, 134 to 154, and 203 to 223; these read LHGQVFIVSWLVMLALIIFAL, VPYISTVFLFIFGANWAGALI, INVTVALALLTSISYFYAGIS, and VFALLVPILIPLPVMTLGLFA.

It belongs to the ATPase A chain family. F-type ATPases have 2 components, CF(1) - the catalytic core - and CF(0) - the membrane proton channel. CF(1) has five subunits: alpha(3), beta(3), gamma(1), delta(1), epsilon(1). CF(0) has four main subunits: a, b, b' and c.

Its subcellular location is the plastid. It is found in the chloroplast thylakoid membrane. Its function is as follows. Key component of the proton channel; it plays a direct role in the translocation of protons across the membrane. The protein is ATP synthase subunit a, chloroplastic of Guillardia theta (Cryptophyte).